Consider the following 174-residue polypeptide: Actin-related protein 2/3 complex subunit 3 (174 aa).

This sequence belongs to the ARPC3 family. Component of the Arp2/3 complex composed of arpB/Arp2, arpC/Arp3, arcA/p41-arc, arcB/p34-arc, arcC/p21-arc, arcD/p20-arc and arcE/p16-arc. Interacts with carmil (via the region between the LRR domain and COOH-terminal proline-rich domain); carmil is required for Arp2/3-dependent actin nucleation. Arp2/3 complex, MyoB, MyoC, and the alpha and beta subunits of capping protein all form a larger complex with carmil.

Its subcellular location is the cytoplasm. It is found in the cytoskeleton. The protein resides in the cytosol. It localises to the cell cortex. The protein localises to the cell projection. Its subcellular location is the pseudopodium. In terms of biological role, functions as a component of the Arp2/3 complex which is involved in regulation of actin polymerization and together with an activating nucleation-promoting factor (NPF) mediates the formation of branched actin networks. Seems to contact the pointed end of the daughter actin filament. The Arp2/3 complex is involved in organizing the actin system in cell motility and chemotaxis, in phagocytosis and macropinocytosis, at late steps of endosome processing, and in mitosis. In concert with a group of other proteins, the Arp2/3 complex plays a general role in the rapid activation and adaptation of the actin system to its multiple functions. In Dictyostelium discoideum (Social amoeba), this protein is Actin-related protein 2/3 complex subunit 3 (arcC).